Reading from the N-terminus, the 612-residue chain is MALVSGAPLASRSCLNKSLISSTHELKPLRRTILPTLRWKSATPSINMCLTTSNSVDAVQRRIANHHSNLWDDDFIQSLSTPYEAPSYRERAERLIGEVKEMFESMGPNNDLLQRLSMVESVERLGIDRHFKNEIKSALDYVYSHWNEKGIGCGRDSVVSDLNSTALALRTLRLHGYPVSSDVLEHFKDQKGRFACSSIKTEGEIRSLLNLFRASLVAFPNEKVMEEAEIFSTTYLKEAVQKIPVSSLSRQIEYNMEYGWHTNLPRLEARNYMGDMIHEMSYMNAEKLLELAKLEFNIFHSLQERELKHLSRWWKDSGFSQLNFVRHRHVEYYTLASCIDIDPKHSAFRLGFAKMCHLITVLDDIYDTFGTMDELKLFTAAIKRWDPSATEWLPEYMKGVYMVVYETVNEMAGEAKKSQGRDTINYARQAWEAYIDSYMKEAEWISSGCLPTFEEYYENGKVSFGYQISVLQPILTLDVPLPHHILQEIIFPSRFNGLASGILRLKGDTRCYQADRARGEEASCISCYMNDNPGATEEDALNHIHAMVNELMKEFNWELLKPDNNVPVSSKKHAFDITRAVHHGYKYRDGYSVANNEIKNLVITTVLEPVPL.

The N-terminal 52 residues, 1–52, are a transit peptide targeting the chloroplast; it reads MALVSGAPLASRSCLNKSLISSTHELKPLRRTILPTLRWKSATPSINMCLTT. 3 residues coordinate Mg(2+): D363, D367, and D515. Residues 363 to 367 carry the DDXXD motif motif; it reads DDIYD.

Belongs to the terpene synthase family. Tpsd subfamily. Mg(2+) serves as cofactor. The cofactor is Mn(2+).

The protein localises to the plastid. The protein resides in the chloroplast. The catalysed reaction is (2E)-geranyl diphosphate + H2O = 1,8-cineole + diphosphate. The protein operates within terpene metabolism; oleoresin biosynthesis. Terpene synthase (TPS) involved in the biosynthesis of monoterpene natural products included in conifer oleoresin secretions and volatile emissions; these compounds contribute to biotic and abiotic stress defense against herbivores and pathogens. Catalyzes the conversion of (2E)-geranyl diphosphate (GPP) to 1,8-cineole. The chain is 1,8-cineole synthase, chloroplastic from Picea engelmannii x Picea glauca (Hybrid white spruce).